The chain runs to 914 residues: Neutral alpha-glucosidase C (914 aa).

The Nucleophile role is filled by D511. E514 is a catalytic residue. The Proton donor role is filled by D587.

This sequence belongs to the glycosyl hydrolase 31 family.

The enzyme catalyses Hydrolysis of terminal, non-reducing (1-&gt;4)-linked alpha-D-glucose residues with release of alpha-D-glucose.. Has alpha-glucosidase activity. In Homo sapiens (Human), this protein is Neutral alpha-glucosidase C (GANC).